Consider the following 67-residue polypeptide: Small ribosomal subunit protein bS21 (67 aa).

The protein belongs to the bacterial ribosomal protein bS21 family.

The protein is Small ribosomal subunit protein bS21 of Nitratidesulfovibrio vulgaris (strain DP4) (Desulfovibrio vulgaris).